Here is a 793-residue protein sequence, read N- to C-terminus: Putative glutamate--cysteine ligase 2-3 (793 aa).

Positions Met1 to Asp407 are carboxylate-amine ligase. The segment at Thr367–Arg390 is disordered. A peptidase M20 region spans residues Met408 to Gly793.

The protein in the C-terminal section; belongs to the glutamate--cysteine ligase type 2 family. YbdK subfamily.

The enzyme catalyses L-cysteine + L-glutamate + ATP = gamma-L-glutamyl-L-cysteine + ADP + phosphate + H(+). Its function is as follows. ATP-dependent carboxylate-amine ligase which exhibits weak glutamate--cysteine ligase activity. This Rhodococcus jostii (strain RHA1) protein is Putative glutamate--cysteine ligase 2-3.